The chain runs to 249 residues: Probable transcriptional regulatory protein CYB_1350 (249 aa).

The protein belongs to the TACO1 family.

The protein resides in the cytoplasm. In Synechococcus sp. (strain JA-2-3B'a(2-13)) (Cyanobacteria bacterium Yellowstone B-Prime), this protein is Probable transcriptional regulatory protein CYB_1350.